A 789-amino-acid chain; its full sequence is MVSFSAPKKRRRGRSQRSMSSLNSLPVPNVGLLPGNSNFVSSSASSSGRFNVEVVNGSNQTVKSYPGIGDEIITINKEATTEALLALTAGFPADSLTEEEIEFGVVPIVGGIEQVNYILIRNHIISKWRENISSWVTKEMFLNSIPKHCSSLLDSAYNYLVTHGYINFGIAQAIKDKFPAQSSKSSVIIVGAGLSGLAAARQLMRFGFKVTVLEGRKRPGGRVYTKKMEANRVGAAADLGGSVLTGTLGNPLGIIARQLGSSLYKVRDKCPLYRVDGKPVDPDVDIKVEVAFNQLLDKASKLRQLMGDVSMDVSLGAALETFRQVSGNDVATEEMGLFNWHLANLEYANAGLVSKLSLAFWDQDDPYDMGGDHCFLPGGNGRLVQALAENVPILYEKTVQTIRYGSNGVKVTAGNQVYEGDMVLCTVPLGVLKNGSIKFVPELPQRKLDCIKRLGFGLLNKVAMLFPYVFWSTDLDTFGHLTEDPNYRGEFFLFYSYAPVAGGALLIALVAGEAAHKFETMPPTDAVTRVLHILRGIYEPQGINVPDPLQTVCTRWGGDPFSLGSYSNVAVGASGDDYDILAESVGDGRLFFAGEATTRRYPATMHGAFVTGLREAANMAQSAKARGIRKRIDRNPSRNAHSCAILLADLFRDPDLEFGSFCIIFSRRNPDPKSPAILRVTLSEPRKRNEDPKADQHSNKILFQQLQSHFNQQQQIQVYTLLTRQQALDLREVRGGDEKRLYYLCETLGVKLVGRKGLGVGADSVIASIKAERTGRKLPSSSTSGTKSG.

The disordered stretch occupies residues 1-23; it reads MVSFSAPKKRRRGRSQRSMSSLN. In terms of domain architecture, SWIRM spans 76 to 177; it reads NKEATTEALL…FGIAQAIKDK (102 aa). Residues Ser-195, Glu-214, Arg-216, Arg-222, and 240–243 contribute to the FAD site; that span reads GGSV. Lys-287 is covalently cross-linked (Glycyl lysine isopeptide (Lys-Gly) (interchain with G-Cter in SUMO)). FAD-binding positions include Glu-595, 604 to 605, and 607 to 612; these read TM and GAFVTG. Residues Lys-693 and Lys-770 each participate in a glycyl lysine isopeptide (Lys-Gly) (interchain with G-Cter in SUMO) cross-link.

This sequence belongs to the flavin monoamine oxidase family. As to quaternary structure, interacts with HDA6. It depends on FAD as a cofactor. In terms of processing, sumoylated at Lys-287, Lys-693 and Lys-770 by SIZ1. Sumoylation alters its activity and the histone H4 acetylation status of FLC locus, promoting FLC expression.

In terms of biological role, probable histone demethylase that promotes flowering independently of the photoperiod and vernalization pathways by repressing FLOWERING LOCUS C (FLC), a floral repressor that blocks the transition from vegetative to reproductive development. Probably mediates histone H3 'Lys-4' demethylation at FLC locus. Seems to act in partial redundancy with LDL1 and LDL2 to repress FLC expression. Required for histone H4 deacetylation of FLC locus. May be a component of the histone deacetylase complex. Forms a histone deacetylase complex with HDA5, HDA6 and MSI4/FVE that represses FLC gene expression to control flowering time. Required for systemic acquired resistance (SAR) toward pathogenic bacteria (e.g. Pseudomonas syringae pv tomato DC3000 (avrPto)). Together with FLD and MSI4/FVE, contributes to dehydroabietinal-dependent (DA, a diterpenoid tricyclic diterpene) activation of flowering ans SAR. In Arabidopsis thaliana (Mouse-ear cress), this protein is Protein FLOWERING LOCUS D.